The sequence spans 417 residues: Phosphoglycerate kinase (417 aa).

Substrate contacts are provided by residues 24 to 26 (DLN), Arg44, 67 to 70 (HLGR), Arg126, and Arg170. ATP contacts are provided by residues Lys220, Gly316, Glu347, and 373–376 (GGDS).

Belongs to the phosphoglycerate kinase family. As to quaternary structure, monomer.

It is found in the cytoplasm. The enzyme catalyses (2R)-3-phosphoglycerate + ATP = (2R)-3-phospho-glyceroyl phosphate + ADP. It functions in the pathway carbohydrate degradation; glycolysis; pyruvate from D-glyceraldehyde 3-phosphate: step 2/5. This chain is Phosphoglycerate kinase, found in Renibacterium salmoninarum (strain ATCC 33209 / DSM 20767 / JCM 11484 / NBRC 15589 / NCIMB 2235).